Reading from the N-terminus, the 519-residue chain is Molybdate transporter 1 (519 aa).

The next 7 membrane-spanning stretches (helical) occupy residues 98-118 (LLHA…SQAI), 164-184 (LGTE…ATTL), 370-390 (AVAL…AMPC), 412-432 (ILLG…LVVL), 436-456 (FPQP…ASVV), 464-484 (GYTF…TGTG), and 485-505 (FLVG…VAAA).

It belongs to the SLC26A/SulP transporter (TC 2.A.53) family.

Its subcellular location is the membrane. Its activity is regulated as follows. 60% inhibition by 20 uM tungstate or by lack of glucose in the medium, but no inhibition by sulfate. Its function is as follows. High affinity molybdate transporter. Acts through an energy-dependent process. This is Molybdate transporter 1 (MOT1) from Chlamydomonas reinhardtii (Chlamydomonas smithii).